The following is a 239-amino-acid chain: Ribosomal RNA small subunit methyltransferase G (239 aa).

S-adenosyl-L-methionine is bound by residues glycine 95, leucine 100, 118–120 (EAT), 146–147 (AE), and arginine 164.

It belongs to the methyltransferase superfamily. RNA methyltransferase RsmG family.

It localises to the cytoplasm. The enzyme catalyses guanosine(527) in 16S rRNA + S-adenosyl-L-methionine = N(7)-methylguanosine(527) in 16S rRNA + S-adenosyl-L-homocysteine. Specifically methylates the N7 position of guanine in position 527 of 16S rRNA. In Sorangium cellulosum (strain So ce56) (Polyangium cellulosum (strain So ce56)), this protein is Ribosomal RNA small subunit methyltransferase G.